The following is a 104-amino-acid chain: Large ribosomal subunit protein bL21 (104 aa).

The protein belongs to the bacterial ribosomal protein bL21 family. Part of the 50S ribosomal subunit. Contacts protein L20.

Functionally, this protein binds to 23S rRNA in the presence of protein L20. The polypeptide is Large ribosomal subunit protein bL21 (Thermodesulfovibrio yellowstonii (strain ATCC 51303 / DSM 11347 / YP87)).